Here is a 285-residue protein sequence, read N- to C-terminus: Probable fructose-bisphosphate aldolase (285 aa).

S50 serves as a coordination point for D-glyceraldehyde 3-phosphate. Residue D85 is the Proton donor of the active site. The Zn(2+) site is built by H86, D107, E137, and H181. G182 provides a ligand contact to dihydroxyacetone phosphate. Position 209 (H209) interacts with Zn(2+). Residues 210–212 (GGT) and 231–234 (NVNT) each bind dihydroxyacetone phosphate. Residues T212 and T234 each carry the phosphothreonine modification.

This sequence belongs to the class II fructose-bisphosphate aldolase family. The cofactor is Zn(2+). Post-translationally, phosphorylated during sporulation.

The catalysed reaction is beta-D-fructose 1,6-bisphosphate = D-glyceraldehyde 3-phosphate + dihydroxyacetone phosphate. The protein operates within carbohydrate degradation; glycolysis; D-glyceraldehyde 3-phosphate and glycerone phosphate from D-glucose: step 4/4. Its function is as follows. Catalyzes the aldol condensation of dihydroxyacetone phosphate (DHAP or glycerone-phosphate) with glyceraldehyde 3-phosphate (G3P) to form fructose 1,6-bisphosphate (FBP) in gluconeogenesis and the reverse reaction in glycolysis. This chain is Probable fructose-bisphosphate aldolase (fbaA), found in Bacillus subtilis (strain 168).